The sequence spans 335 residues: Holliday junction branch migration complex subunit RuvB (335 aa).

Positions 4 to 184 (ADRIISSNAQ…FGIVQRLEFY (181 aa)) are large ATPase domain (RuvB-L). ATP is bound by residues Ile-23, Arg-24, Gly-65, Lys-68, Thr-69, Thr-70, 131-133 (EDY), Arg-174, Tyr-184, and Arg-221. Thr-69 is a Mg(2+) binding site. The interval 185-255 (SVEDLTSIVA…IAKSALSMLD (71 aa)) is small ATPAse domain (RuvB-S). The head domain (RuvB-H) stretch occupies residues 258 to 335 (QAGFDYLDRK…RHFGLDKLTE (78 aa)). Arg-294, Arg-313, and Arg-318 together coordinate DNA.

Belongs to the RuvB family. In terms of assembly, homohexamer. Forms an RuvA(8)-RuvB(12)-Holliday junction (HJ) complex. HJ DNA is sandwiched between 2 RuvA tetramers; dsDNA enters through RuvA and exits via RuvB. An RuvB hexamer assembles on each DNA strand where it exits the tetramer. Each RuvB hexamer is contacted by two RuvA subunits (via domain III) on 2 adjacent RuvB subunits; this complex drives branch migration. In the full resolvosome a probable DNA-RuvA(4)-RuvB(12)-RuvC(2) complex forms which resolves the HJ.

The protein resides in the cytoplasm. The catalysed reaction is ATP + H2O = ADP + phosphate + H(+). In terms of biological role, the RuvA-RuvB-RuvC complex processes Holliday junction (HJ) DNA during genetic recombination and DNA repair, while the RuvA-RuvB complex plays an important role in the rescue of blocked DNA replication forks via replication fork reversal (RFR). RuvA specifically binds to HJ cruciform DNA, conferring on it an open structure. The RuvB hexamer acts as an ATP-dependent pump, pulling dsDNA into and through the RuvAB complex. RuvB forms 2 homohexamers on either side of HJ DNA bound by 1 or 2 RuvA tetramers; 4 subunits per hexamer contact DNA at a time. Coordinated motions by a converter formed by DNA-disengaged RuvB subunits stimulates ATP hydrolysis and nucleotide exchange. Immobilization of the converter enables RuvB to convert the ATP-contained energy into a lever motion, pulling 2 nucleotides of DNA out of the RuvA tetramer per ATP hydrolyzed, thus driving DNA branch migration. The RuvB motors rotate together with the DNA substrate, which together with the progressing nucleotide cycle form the mechanistic basis for DNA recombination by continuous HJ branch migration. Branch migration allows RuvC to scan DNA until it finds its consensus sequence, where it cleaves and resolves cruciform DNA. The chain is Holliday junction branch migration complex subunit RuvB from Mannheimia succiniciproducens (strain KCTC 0769BP / MBEL55E).